We begin with the raw amino-acid sequence, 499 residues long: Endoglucanase (499 aa).

Positions 1–29 (MKRSISIFITCLLITLLTMGGMIASPASA) are cleaved as a signal peptide. Substrate-binding positions include histidine 65, 69–70 (WY), tyrosine 96, and histidine 131. The active-site Proton donor is the glutamate 169. Tyrosine 231 contacts substrate. Glutamate 257 acts as the Nucleophile in catalysis. Substrate is bound by residues 263-264 (AS), tryptophan 291, and 296-298 (KQE). The CBM3 domain occupies 350–499 (QENGISVQYR…GKLIWGTEPN (150 aa)).

The protein belongs to the glycosyl hydrolase 5 (cellulase A) family.

It carries out the reaction Endohydrolysis of (1-&gt;4)-beta-D-glucosidic linkages in cellulose, lichenin and cereal beta-D-glucans.. In Bacillus subtilis (strain 168), this protein is Endoglucanase (eglS).